We begin with the raw amino-acid sequence, 370 residues long: Cobalt-precorrin-5B C(1)-methyltransferase (370 aa).

The protein belongs to the CbiD family.

The catalysed reaction is Co-precorrin-5B + S-adenosyl-L-methionine = Co-precorrin-6A + S-adenosyl-L-homocysteine. Its pathway is cofactor biosynthesis; adenosylcobalamin biosynthesis; cob(II)yrinate a,c-diamide from sirohydrochlorin (anaerobic route): step 6/10. Functionally, catalyzes the methylation of C-1 in cobalt-precorrin-5B to form cobalt-precorrin-6A. The sequence is that of Cobalt-precorrin-5B C(1)-methyltransferase from Prochlorococcus marinus (strain MIT 9215).